The sequence spans 424 residues: tRNA(Ile)-lysidine synthase (424 aa).

26 to 31 contacts ATP; sequence SGGIDS.

This sequence belongs to the tRNA(Ile)-lysidine synthase family.

The protein localises to the cytoplasm. It carries out the reaction cytidine(34) in tRNA(Ile2) + L-lysine + ATP = lysidine(34) in tRNA(Ile2) + AMP + diphosphate + H(+). Ligates lysine onto the cytidine present at position 34 of the AUA codon-specific tRNA(Ile) that contains the anticodon CAU, in an ATP-dependent manner. Cytidine is converted to lysidine, thus changing the amino acid specificity of the tRNA from methionine to isoleucine. This chain is tRNA(Ile)-lysidine synthase, found in Streptococcus agalactiae serotype V (strain ATCC BAA-611 / 2603 V/R).